An 880-amino-acid polypeptide reads, in one-letter code: GAS2-like protein 2 (880 aa).

One can recognise a Calponin-homology (CH) domain in the interval 32–159 (EAMKEDLAEW…CLLELGRRAW (128 aa)). The tract at residues 180–200 (RRELALPPPDPSPPAPPRRQP) is disordered. Positions 185–198 (LPPPDPSPPAPPRR) are enriched in pro residues. The 73-residue stretch at 201–273 (CHFRNLDQMV…HYLDKHDPCR (73 aa)) folds into the GAR domain. Disordered regions lie at residues 283–360 (SFLK…MAPF), 372–437 (WRQP…NPTP), 489–533 (ESVR…ELGR), and 676–880 (APTG…ESWV). Residues 301–315 (GPSQTQPTMTISRSQ) are compositionally biased toward polar residues. An interaction with ADORA2A region spans residues 438-880 (QRLRAIEATT…PLPPEEESWV (443 aa)). A compositionally biased stretch (pro residues) spans 506-515 (RLPPARPPTP). Residues 725 to 734 (QDCSASTVSA) are compositionally biased toward polar residues. Composition is skewed to basic residues over residues 757 to 767 (KGRRTLRKPKR) and 774 to 785 (LKLRPRIRPRRD).

This sequence belongs to the GAS2 family. In terms of assembly, interacts with ADORA2A (via its cytoplasmic C-terminal domain). Interacts with GNAS, GNAL, GNAQ, and GNA13. Interacts with MAPRE1. In terms of tissue distribution, expressed in bronchial and nasal epithelial cells (at protein level). Expressed in brain, kidney, lung, testis, fallopian tubes, and skeletal muscle. Expressed at low levels in stomach and colon.

Its subcellular location is the cytoplasm. It is found in the cytoskeleton. The protein resides in the cell membrane. The protein localises to the stress fiber. It localises to the cilium basal body. In terms of biological role, involved in the cross-linking of microtubules and microfilaments. Regulates microtubule dynamics and stability by interacting with microtubule plus-end tracking proteins, such as MAPRE1, to regulate microtubule growth along actin stress fibers. Enhances ADORA2-mediated adenylyl cyclase activation by acting as a scaffold to recruit trimeric G-protein complexes to ADORA2A. Regulates ciliary orientation and performance in cells located in the airway. This chain is GAS2-like protein 2 (GAS2L2), found in Homo sapiens (Human).